The chain runs to 257 residues: Imidazole glycerol phosphate synthase subunit HisF (257 aa).

Active-site residues include Asp11 and Asp130.

This sequence belongs to the HisA/HisF family. Heterodimer of HisH and HisF.

It is found in the cytoplasm. The catalysed reaction is 5-[(5-phospho-1-deoxy-D-ribulos-1-ylimino)methylamino]-1-(5-phospho-beta-D-ribosyl)imidazole-4-carboxamide + L-glutamine = D-erythro-1-(imidazol-4-yl)glycerol 3-phosphate + 5-amino-1-(5-phospho-beta-D-ribosyl)imidazole-4-carboxamide + L-glutamate + H(+). The protein operates within amino-acid biosynthesis; L-histidine biosynthesis; L-histidine from 5-phospho-alpha-D-ribose 1-diphosphate: step 5/9. IGPS catalyzes the conversion of PRFAR and glutamine to IGP, AICAR and glutamate. The HisF subunit catalyzes the cyclization activity that produces IGP and AICAR from PRFAR using the ammonia provided by the HisH subunit. The chain is Imidazole glycerol phosphate synthase subunit HisF from Xylella fastidiosa (strain M23).